A 161-amino-acid polypeptide reads, in one-letter code: Dehydrin DHN3 (161 aa).

A compositionally biased stretch (basic and acidic residues) spans 1–12 (MEHGHATNRVDE). A disordered region spans residues 1 to 161 (MEHGHATNRV…KIKEKLPGQH (161 aa)). Residues 20–38 (HGVGTGMGAHGGVGTGAAA) are compositionally biased toward gly residues. 2 stretches are compositionally biased toward low complexity: residues 93–107 (DQQQ…HGHT) and 115–130 (HGAT…QGHT). Repeat copies occupy residues 101–123 (YGQH…TGGT) and 124–144 (YGQQ…DGTG). Residues 101–144 (YGQHGHTGMTGTGEHGATATGGTYGQQGHTGMTGTGAHGTDGTG) form a 2 X approximate tandem repeats region. Residues 131–142 (GMTGTGAHGTDG) are compositionally biased toward gly residues. Basic and acidic residues predominate over residues 143–161 (TGEKKGIMDKIKEKLPGQH).

Belongs to the plant dehydrin family.

In Hordeum vulgare (Barley), this protein is Dehydrin DHN3 (DHN3).